Here is a 473-residue protein sequence, read N- to C-terminus: Pentatricopeptide repeat-containing protein At3g60050 (473 aa).

9 PPR repeats span residues 148–182 (TVNS…GFPT), 183–217 (TART…NYRP), 218–252 (FKHS…GFSP), 253–287 (DVLT…GFSP), 288–322 (DSYT…GIDP), 323–357 (SVLH…GCRP), 358–392 (DVVC…GQLP), 393–427 (NVFT…GCNP), and 428–462 (NFVV…GHYV).

The protein belongs to the PPR family. P subfamily.

The polypeptide is Pentatricopeptide repeat-containing protein At3g60050 (Arabidopsis thaliana (Mouse-ear cress)).